A 78-amino-acid polypeptide reads, in one-letter code: Ubiquinol-cytochrome-c reductase complex assembly factor 3 (78 aa).

The Mitochondrial matrix segment spans residues 1 to 5 (MSGMR). A helical transmembrane segment spans residues 6-26 (ILTGSVALGGLTYAIWIIFSP). Topologically, residues 27–78 (GEERKKEILKSLPEANPVRMEETRKRNAIMLQVLKDAAETNDNIARGFGSQK) are mitochondrial intermembrane.

The protein belongs to the UQCC3 family. As to quaternary structure, associates with the ubiquinol-cytochrome c reductase complex (mitochondrial respiratory chain complex III or cytochrome b-c1 complex).

The protein localises to the mitochondrion inner membrane. In terms of biological role, required for the assembly of the ubiquinol-cytochrome c reductase complex (mitochondrial respiratory chain complex III or cytochrome b-c1 complex), mediating cytochrome b recruitment and probably stabilization within the complex. Thereby, plays an important role in ATP production by mitochondria. Cardiolipin-binding protein, it may also control the cardiolipin composition of mitochondria membranes and their morphology. The polypeptide is Ubiquinol-cytochrome-c reductase complex assembly factor 3 (Danio rerio (Zebrafish)).